The sequence spans 1187 residues: Roquin-2 (1187 aa).

Residues Cys14, Cys17, Cys33, His35, Cys38, Cys50, and Asp53 each coordinate Zn(2+). An RING-type; degenerate zinc finger spans residues 14–54 (CPICYNEFDENVHKPISLGCSHTVCKTCLNKLHRKACPFDQ). The HEPN-N stretch occupies residues 91–170 (ENKHYEVAKK…RTVTELILQH (80 aa)). The ROQ stretch occupies residues 171 to 325 (QNPQQLSANL…SIIDKLQSPE (155 aa)). Residues 326–396 (SFAKSVQELT…GLVDFIQNYS (71 aa)) form an HEPN-C region. The segment at 410-438 (KYKTSMCRDLRQQGGCPRGTNCTFAHSQE) adopts a C3H1-type zinc-finger fold. Disordered stretches follow at residues 527–571 (VGTN…GTEL) and 640–677 (NVPE…PPPQ). Over residues 529-545 (TNAQNAGPSAESVSENK) the composition is skewed to polar residues. The residue at position 548 (Ser548) is a Phosphoserine. The segment covering 553-571 (PVSNAAATSAGPSNFGTEL) has biased composition (polar residues). Ser806, Ser981, and Ser1115 each carry phosphoserine.

In terms of assembly, interacts with EDC4. Interacts with CCR4-NOT deadenylase complex. Interacts with MAP3K5; the interaction is probably stimulus-dependent. Proteolytically cleaved by MALT1 in activated CD4(+) T cells; cleavage at Arg-509 is critical for promoting RC3H1 degradation in response to T-cell receptor (TCR) stimulation, and hence is necessary for prolonging the stability of a set of mRNAs controlling Th17 cell differentiation. Highest levels in lymph node and thymus and slightly lesser amounts in brain, lung, and spleen (at protein level). Very weak expression in heart, muscle, and kidney (at protein level). Expressed in CD4(+) helper T-cells (at protein level).

It is found in the cytoplasm. Its subcellular location is the P-body. It catalyses the reaction S-ubiquitinyl-[E2 ubiquitin-conjugating enzyme]-L-cysteine + [acceptor protein]-L-lysine = [E2 ubiquitin-conjugating enzyme]-L-cysteine + N(6)-ubiquitinyl-[acceptor protein]-L-lysine.. The protein operates within protein modification; protein ubiquitination. Binding to dsRNA, but not CDE RNA, crosstalks with the E3 ubiquitin ligase activity and may inhibit ubiquitination. Functionally, post-transcriptional repressor of mRNAs containing a conserved stem loop motif, called constitutive decay element (CDE), which is often located in the 3'-UTR, as in HMGXB3, ICOS, IER3, NFKBID, NFKBIZ, PPP1R10, TNF and in many more mRNAs. Binds to CDE and promotes mRNA deadenylation and degradation. This process does not involve miRNAs. In follicular helper T (Tfh) cells, represses of ICOS and TNFRSF4 expression, thus preventing spontaneous Tfh cell differentiation, germinal center B-cell differentiation in the absence of immunization and autoimmunity. In resting or LPS-stimulated macrophages, controls inflammation by suppressing TNF expression. Also recognizes CDE in its own mRNA and in that of paralogous RC3H1, possibly leading to feedback loop regulation. Inhibits cooperatively with ZC3H12A the differentiation of helper T cells Th17 in lungs. They repress target mRNA encoding the Th17 cell-promoting factors IL6, ICOS, REL, IRF4, NFKBID and NFKBIZ. The cooperation requires RNA-binding by RC3H1 and the nuclease activity of ZC3H12A. miRNA-binding protein that regulates microRNA homeostasis. Enhances DICER-mediated processing of pre-MIR146a but reduces mature MIR146a levels through an increase of 3' end uridylation. Both inhibits ICOS mRNA expression and they may act together to exert the suppression. Acts as a ubiquitin E3 ligase. Pairs with E2 enzymes UBE2B, UBE2D2, UBE2E2, UBE2E3, UBE2G2, UBE2K and UBE2Q2 and produces polyubiquitin chains. Shows the strongest activity when paired with UBE2N:UBE2V1 or UBE2N:UBE2V2 E2 complexes and generate both short and long polyubiquitin chains. Involved in the ubiquitination of MAP3K5. Able to interact with double-stranded RNA (dsRNA). The polypeptide is Roquin-2 (Rc3h2) (Mus musculus (Mouse)).